The primary structure comprises 387 residues: Fetuin-B (387 aa).

A signal peptide spans 1–18 (MNVLLLLVLCTLAMGCGA). Cystatin fetuin-B-type domains follow at residues 25–139 (AARP…YNCT) and 150–258 (MTCP…VTCS). N-linked (GlcNAc...) asparagine glycosylation occurs at N37. 5 cysteine pairs are disulfide-bonded: C94–C105, C118–C138, C152–C155, C217–C225, and C238–C257. N137 carries N-linked (GlcNAc...) asparagine glycosylation. A disordered region spans residues 264-306 (APTPRGENATVNQRPANPSKTEELQQQNTAPTNSPTKAVPKGS). The N-linked (GlcNAc...) asparagine glycan is linked to N271. Polar residues predominate over residues 272–299 (ATVNQRPANPSKTEELQQQNTAPTNSPT). 2 O-linked (GalNAc...) threonine glycosylation sites follow: T292 and T295. S320 is modified (phosphoserine). The tract at residues 366-387 (KEQRSAECPGPAQKGYPFILPS) is disordered.

It belongs to the fetuin family. In terms of tissue distribution, liver and testis.

It localises to the secreted. Functionally, protease inhibitor required for egg fertilization. Required to prevent premature zona pellucida hardening before fertilization, probably by inhibiting the protease activity of ASTL, a protease that mediates the cleavage of ZP2 and triggers zona pellucida hardening. This is Fetuin-B (FETUB) from Bos taurus (Bovine).